Reading from the N-terminus, the 263-residue chain is Fibroblast growth factor 23 (263 aa).

An N-terminal signal peptide occupies residues 1–23 (MDVNRRIGVKDALLALLLALLQG). An intrachain disulfide couples C103 to C121. The N-linked (GlcNAc...) asparagine glycan is linked to N124. The segment covering 198–211 (VGRAEEGSDSRALQ) has biased composition (basic and acidic residues). Residues 198–263 (VGRAEEGSDS…GSPRSSGTVG (66 aa)) form a disordered region. Acidic residues predominate over residues 212 to 226 (EDDADLEVETEVEVG). A compositionally biased stretch (basic and acidic residues) spans 227–245 (DDGRNASRERLQAPSDHDP). The N-linked (GlcNAc...) asparagine glycan is linked to N231. Polar residues predominate over residues 249–263 (FSSNPGSPRSSGTVG).

Belongs to the heparin-binding growth factors family.

The protein localises to the secreted. The protein is Fibroblast growth factor 23 (fgf23) of Tetraodon nigroviridis (Spotted green pufferfish).